The sequence spans 550 residues: Mitochondrial distribution and morphology protein 12 (550 aa).

The SMP-LTD domain occupies 1 to 550; that stretch reads MSIDLNWETV…VYPSYWTFLV (550 aa). Disordered regions lie at residues 76 to 97, 196 to 386, and 466 to 489; these read SDLASESGSEEDEEEIADDRRR, GHGH…KLRE, and ENEVDGGEGDKQTGFKSPPGGGNG. The segment covering 83 to 92 has biased composition (acidic residues); that stretch reads GSEEDEEEIA. Over residues 270–286 the composition is skewed to pro residues; it reads PPFPPSSTGGPSPPPGL. Basic residues predominate over residues 288–305; it reads KPHHPHHPHHHHAHHAHP. Basic and acidic residues predominate over residues 327 to 344; it reads PTRDKTTPSHHPDPEDVH. Residues 346–355 are compositionally biased toward polar residues; the sequence is PNTTTTNKQR. The segment covering 356–371 has biased composition (low complexity); that stretch reads STSPATSSPLATSAQE.

The protein belongs to the MDM12 family. In terms of assembly, component of the ER-mitochondria encounter structure (ERMES) or MDM complex, composed of MMM1, MDM10, MDM12 and MDM34. An MMM1 homodimer associates with one molecule of MDM12 on each side in a pairwise head-to-tail manner, and the SMP-LTD domains of MMM1 and MDM12 generate a continuous hydrophobic tunnel for phospholipid trafficking.

Its subcellular location is the mitochondrion outer membrane. It is found in the endoplasmic reticulum membrane. Its function is as follows. Component of the ERMES/MDM complex, which serves as a molecular tether to connect the endoplasmic reticulum (ER) and mitochondria. Components of this complex are involved in the control of mitochondrial shape and protein biogenesis, and function in nonvesicular lipid trafficking between the ER and mitochondria. MDM12 is required for the interaction of the ER-resident membrane protein MMM1 and the outer mitochondrial membrane-resident beta-barrel protein MDM10. The MDM12-MMM1 subcomplex functions in the major beta-barrel assembly pathway that is responsible for biogenesis of all mitochondrial outer membrane beta-barrel proteins, and acts in a late step after the SAM complex. The MDM10-MDM12-MMM1 subcomplex further acts in the TOM40-specific pathway after the action of the MDM12-MMM1 complex. Essential for establishing and maintaining the structure of mitochondria and maintenance of mtDNA nucleoids. In Podospora anserina (strain S / ATCC MYA-4624 / DSM 980 / FGSC 10383) (Pleurage anserina), this protein is Mitochondrial distribution and morphology protein 12.